The chain runs to 41 residues: Cytochrome b559 subunit beta (41 aa).

The helical transmembrane segment at 16-32 (WLAIHALAVPTVFFLGS) threads the bilayer. His20 is a heme binding site.

The protein belongs to the PsbE/PsbF family. As to quaternary structure, heterodimer of an alpha subunit and a beta subunit. PSII is composed of 1 copy each of membrane proteins PsbA, PsbB, PsbC, PsbD, PsbE, PsbF, PsbH, PsbI, PsbJ, PsbK, PsbL, PsbM, PsbT, PsbX, PsbY, PsbZ, Psb30/Ycf12, at least 3 peripheral proteins of the oxygen-evolving complex and a large number of cofactors. It forms dimeric complexes. Requires heme b as cofactor.

Its subcellular location is the plastid. The protein resides in the chloroplast thylakoid membrane. This b-type cytochrome is tightly associated with the reaction center of photosystem II (PSII). PSII is a light-driven water:plastoquinone oxidoreductase that uses light energy to abstract electrons from H(2)O, generating O(2) and a proton gradient subsequently used for ATP formation. It consists of a core antenna complex that captures photons, and an electron transfer chain that converts photonic excitation into a charge separation. The polypeptide is Cytochrome b559 subunit beta (Oltmannsiellopsis viridis (Marine flagellate)).